Reading from the N-terminus, the 55-residue chain is Large ribosomal subunit protein bL33 (55 aa).

It belongs to the bacterial ribosomal protein bL33 family.

This is Large ribosomal subunit protein bL33 from Bartonella henselae (strain ATCC 49882 / DSM 28221 / CCUG 30454 / Houston 1) (Rochalimaea henselae).